A 183-amino-acid chain; its full sequence is Thioredoxin-like protein CITRX, chloroplastic (183 aa).

A chloroplast-targeting transit peptide spans 1–81 (MALVQSRTFP…REDYLVKKLS (81 aa)). The 102-residue stretch at 82 to 183 (AQELQELVKG…MMHDIIDNEM (102 aa)) folds into the Thioredoxin domain. Active-site nucleophile residues include Cys-106 and Cys-109. A disulfide bond links Cys-106 and Cys-109.

It belongs to the thioredoxin family. Plant CITRX-type subfamily. In terms of assembly, interacts with FLN1 and FLN2. Interacts with MRL7.

It localises to the plastid. The protein resides in the chloroplast. In terms of biological role, thiol-disulfide oxidoreductase that plays a role in proper chloroplast development, most likely through regulating plastid-encoded polymerase (PEP) dependent chloroplast transcription. Acts as a component of the transcriptionally active plastid chromosome that is required for plastid gene expression. The sequence is that of Thioredoxin-like protein CITRX, chloroplastic from Arabidopsis thaliana (Mouse-ear cress).